The chain runs to 323 residues: tRNA U34 carboxymethyltransferase (323 aa).

Carboxy-S-adenosyl-L-methionine is bound by residues Lys91, Trp105, Lys110, Gly130, Ile180–Glu181, Met196, Tyr200, and Arg315.

Belongs to the class I-like SAM-binding methyltransferase superfamily. CmoB family. In terms of assembly, homotetramer.

It carries out the reaction carboxy-S-adenosyl-L-methionine + 5-hydroxyuridine(34) in tRNA = 5-carboxymethoxyuridine(34) in tRNA + S-adenosyl-L-homocysteine + H(+). Its function is as follows. Catalyzes carboxymethyl transfer from carboxy-S-adenosyl-L-methionine (Cx-SAM) to 5-hydroxyuridine (ho5U) to form 5-carboxymethoxyuridine (cmo5U) at position 34 in tRNAs. This Citrifermentans bemidjiense (strain ATCC BAA-1014 / DSM 16622 / JCM 12645 / Bem) (Geobacter bemidjiensis) protein is tRNA U34 carboxymethyltransferase.